Reading from the N-terminus, the 378-residue chain is Lipid-A-disaccharide synthase (378 aa).

Belongs to the LpxB family.

The catalysed reaction is a lipid X + a UDP-2-N,3-O-bis[(3R)-3-hydroxyacyl]-alpha-D-glucosamine = a lipid A disaccharide + UDP + H(+). Its pathway is bacterial outer membrane biogenesis; LPS lipid A biosynthesis. Functionally, condensation of UDP-2,3-diacylglucosamine and 2,3-diacylglucosamine-1-phosphate to form lipid A disaccharide, a precursor of lipid A, a phosphorylated glycolipid that anchors the lipopolysaccharide to the outer membrane of the cell. The sequence is that of Lipid-A-disaccharide synthase from Pseudomonas aeruginosa (strain LESB58).